The sequence spans 128 residues: Large ribosomal subunit protein eL22 (128 aa).

Residue Thr-62 is modified to Phosphothreonine. Phosphoserine is present on Ser-66. Lys-69 carries the post-translational modification N6-succinyllysine.

Belongs to the eukaryotic ribosomal protein eL22 family. Component of the large ribosomal subunit.

The protein resides in the cytoplasm. Component of the large ribosomal subunit. The ribosome is a large ribonucleoprotein complex responsible for the synthesis of proteins in the cell. In Rattus norvegicus (Rat), this protein is Large ribosomal subunit protein eL22 (Rpl22).